A 284-amino-acid chain; its full sequence is N-methyltransferase sirN (284 aa).

It belongs to the methyltransferase superfamily. LaeA methyltransferase family.

Its pathway is mycotoxin biosynthesis. Its function is as follows. N-methyltransferase; part of the gene cluster that mediates the biosynthesis of sirodesmin PL, an epipolythiodioxopiperazine (ETP) characterized by a disulfide bridged cyclic dipeptide and that acts as a phytotoxin which is involved in the blackleg didease of canola. SirD catalyzes the O-prenylation of L-tyrosine (L-Tyr) in the presence of dimethylallyl diphosphate (DMAPP) to yield 4-O-dimethylallyl-L-Tyr, and therefore represents probably the first pathway-specific enzyme in the biosynthesis of sirodesmin PL. 4-O-dimethylallyl-L-Tyr, then undergoes condensation with L-Ser in a reaction catalyzed by the non-ribosomal peptide synthase sirP to form the diketopiperazine (DKP) backbone. Further bishydroxylation of the DKP performed by the cytochrome P450 monooxygenase sirC leads to the production of the intermediate phomamide. This step is essential to form the reactive thiol group required for toxicity of sirodesmin PL. The next steps of sirodesmin biosynthesis are not well understood yet but some predictions could be made from intermediate compounds identification. Phomamide is converted into phomalizarine via oxidation, probably by sirT. Further oxidation, methylation (by sirM or sirN) and reduction steps convert phomalizarine to deacetyl sirodesmin. Finally, acetyltransferase sirH probably acetylates deacetyl sirodesmin to produce sirodesmin PL. The chain is N-methyltransferase sirN from Leptosphaeria maculans (Blackleg fungus).